The following is a 113-amino-acid chain: CRISPR-associated endoribonuclease Cas2 2 (113 aa).

Aspartate 32 provides a ligand contact to Mg(2+).

This sequence belongs to the CRISPR-associated endoribonuclease Cas2 protein family. Homodimer, forms a heterotetramer with a Cas1 homodimer. The cofactor is Mg(2+).

In terms of biological role, CRISPR (clustered regularly interspaced short palindromic repeat), is an adaptive immune system that provides protection against mobile genetic elements (viruses, transposable elements and conjugative plasmids). CRISPR clusters contain sequences complementary to antecedent mobile elements and target invading nucleic acids. CRISPR clusters are transcribed and processed into CRISPR RNA (crRNA). Functions as a ssRNA-specific endoribonuclease. Involved in the integration of spacer DNA into the CRISPR cassette. In Nitrosomonas europaea (strain ATCC 19718 / CIP 103999 / KCTC 2705 / NBRC 14298), this protein is CRISPR-associated endoribonuclease Cas2 2 (cas22).